A 505-amino-acid polypeptide reads, in one-letter code: Glucan endo-1,3-beta-glucosidase 2 (505 aa).

Residues 1–20 (MASLLHLLLLSLSLLVLASA) form the signal peptide. A glycan (N-linked (GlcNAc...) asparagine) is linked at asparagine 97. Catalysis depends on glutamate 125, which acts as the Proton donor. 2 N-linked (GlcNAc...) asparagine glycosylation sites follow: asparagine 180 and asparagine 262. Residue glutamate 272 is the Nucleophile of the active site. N-linked (GlcNAc...) asparagine glycans are attached at residues asparagine 304, asparagine 361, and asparagine 365. A disulfide bridge connects residues cysteine 369 and cysteine 432. N-linked (GlcNAc...) asparagine glycans are attached at residues asparagine 461, asparagine 466, and asparagine 473. Serine 477 carries the GPI-anchor amidated serine lipid modification. The propeptide at 478-505 (SGIRSDLYYSRGIWSILTVMILNVANIL) is removed in mature form.

Belongs to the glycosyl hydrolase 17 family. Post-translationally, contains two additional disulfide bonds.

It is found in the cell membrane. It catalyses the reaction Hydrolysis of (1-&gt;3)-beta-D-glucosidic linkages in (1-&gt;3)-beta-D-glucans.. This chain is Glucan endo-1,3-beta-glucosidase 2, found in Arabidopsis thaliana (Mouse-ear cress).